Consider the following 376-residue polypeptide: Cyclic GMP-AMP synthase-like receptor 1 (376 aa).

Positions 77 and 79 each coordinate Mg(2+).

This sequence belongs to the mab-21 family. Requires Mg(2+) as cofactor. Mn(2+) serves as cofactor.

The catalysed reaction is UTP + ATP = 3',3'-cUAMP + 2 diphosphate. Functionally, nucleotidyltransferase that catalyzes the formation of cyclic UMP-AMP (3',3'-cUAMP) from ATP and UTP and plays a key role in innate immunity. Acts as a key sensor of double-stranded RNA (dsRNA), the presence of dsRNA in the cytoplasm being a danger signal that triggers the immune responses. Directly binds dsRNA, activating the nucleotidyltransferase activity, leading to synthesis of 3',3'-cUAMP, a second messenger that binds to and activates Sting, thereby triggering the immune response via activation of the NF-kappa-B transcription factor. The chain is Cyclic GMP-AMP synthase-like receptor 1 from Stylophora pistillata (Smooth cauliflower coral).